Here is a 461-residue protein sequence, read N- to C-terminus: Coronin-1A (461 aa).

S2 is subject to N-acetylserine. Residue S2 is modified to Phosphoserine; by PKC. WD repeat units lie at residues 13 to 63 (HVFG…LVLP), 73 to 110 (NVPL…MVWE), 123 to 160 (PVVT…LVWD), 164 to 204 (GAAV…RVIE), 207 to 251 (KGTV…ALWD), 258 to 296 (PLSL…RYFE), and 302 to 349 (PFLH…EPIA). A compositionally biased stretch (basic and acidic residues) spans 407–418 (NRGLDSARRRAT). Residues 407–431 (NRGLDSARRRATPEPSSTLSSDTVS) form a disordered region. The residue at position 412 (S412) is a Phosphoserine; by PKC. A Phosphothreonine modification is found at T418. Over residues 420–430 (EPSSTLSSDTV) the composition is skewed to polar residues. S422 carries the phosphoserine modification. A coiled-coil region spans residues 425–461 (LSSDTVSRLEEDVRNLNAIVQKLQERLDRLEETVQAK).

The protein belongs to the WD repeat coronin family. In terms of assembly, binds actin. In terms of processing, phosphorylation at Ser-412 by PKC strongly down-regulates the association with actin. Post-translationally, polyubiquitinated by RNF128 with 'Lys-48'-linked chains, leading to proteasomal degradation.

It is found in the cytoplasm. Its subcellular location is the cytoskeleton. The protein resides in the cell cortex. It localises to the cytoplasmic vesicle. The protein localises to the phagosome membrane. In terms of biological role, may be a crucial component of the cytoskeleton of highly motile cells, functioning both in the invagination of large pieces of plasma membrane, as well as in forming protrusions of the plasma membrane involved in cell locomotion. This Rattus norvegicus (Rat) protein is Coronin-1A (Coro1a).